The chain runs to 792 residues: Type 2 topoisomerase subunit B (792 aa).

The 115-residue stretch at 423–537 (CEIFLVEGDS…EGYVYIAEPP (115 aa)) folds into the Toprim domain. E429, D502, and D504 together coordinate Mg(2+).

This sequence belongs to the type II topoisomerase GyrB family. Heterotetramer, composed of two GyrA and two GyrB chains. In the heterotetramer, 'GyrA' contains the active site tyrosine that forms a transient covalent intermediate with DNA, while 'GyrB' binds cofactors and catalyzes ATP hydrolysis. Mg(2+) serves as cofactor. The cofactor is Mn(2+). Requires Ca(2+) as cofactor.

It localises to the cytoplasm. The enzyme catalyses ATP-dependent breakage, passage and rejoining of double-stranded DNA.. A type II topoisomerase. Despite its similarity to DNA gyrase, this enzyme is not able to supercoil DNA, and instead acts like topoisomerase IV. Relaxes both positively and negatively supercoiled DNA in an ATP-dependent fashion, decatenates interlocked circles. If this subunit is reconstituted with GyrA from E.coli the hybrid enzyme supercoils relaxed plasmid DNA; if paired with E.coli ParC supercoiling is not restored. This the first bacteria shown to not contain DNA gyrase, although it has 2 copies of a reverse gyrase that introduces positive supercoils. Type II topoisomerases break and join 2 DNA strands simultaneously in an ATP-dependent manner. In Aquifex aeolicus (strain VF5), this protein is Type 2 topoisomerase subunit B.